The chain runs to 254 residues: 3-dehydroquinate dehydratase (254 aa).

Residues 47–49 (EWR) and R83 each bind 3-dehydroquinate. H144 functions as the Proton donor/acceptor in the catalytic mechanism. Catalysis depends on K171, which acts as the Schiff-base intermediate with substrate. 3-dehydroquinate contacts are provided by R214, S233, and Q237.

The protein belongs to the type-I 3-dehydroquinase family. In terms of assembly, homodimer.

It carries out the reaction 3-dehydroquinate = 3-dehydroshikimate + H2O. The protein operates within metabolic intermediate biosynthesis; chorismate biosynthesis; chorismate from D-erythrose 4-phosphate and phosphoenolpyruvate: step 3/7. Involved in the third step of the chorismate pathway, which leads to the biosynthesis of aromatic amino acids. Catalyzes the cis-dehydration of 3-dehydroquinate (DHQ) and introduces the first double bond of the aromatic ring to yield 3-dehydroshikimate. The polypeptide is 3-dehydroquinate dehydratase (Bacillus licheniformis (strain ATCC 14580 / DSM 13 / JCM 2505 / CCUG 7422 / NBRC 12200 / NCIMB 9375 / NCTC 10341 / NRRL NRS-1264 / Gibson 46)).